We begin with the raw amino-acid sequence, 1110 residues long: Ribosome assembly protein 1 (1110 aa).

Residues 17 to 262 enclose the tr-type G domain; the sequence is SCIRNICIVA…QKLGAKRENL (246 aa). GTP-binding positions include 26 to 33, 102 to 106, and 156 to 159; these read AHVDHGKT, DSPGH, and NKID. The residue at position 431 (serine 431) is a Phosphoserine.

This sequence belongs to the TRAFAC class translation factor GTPase superfamily. Classic translation factor GTPase family.

Its subcellular location is the cytoplasm. The catalysed reaction is GTP + H2O = GDP + phosphate + H(+). Its activity is regulated as follows. GTPase activity is stimulated in the presence of 60S subunits. Its function is as follows. GTPase involved in the biogenesis of the 60S ribosomal subunit and translational activation of ribosomes. Together with SDO1, may trigger the GTP-dependent release of TIF6 from 60S pre-ribosomes in the cytoplasm, thereby activating ribosomes for translation competence by allowing 80S ribosome assembly and facilitating TIF6 recycling to the nucleus, where it is required for 60S rRNA processing and nuclear export. Inhibits GTPase activity of ribosome-bound EF-2. The polypeptide is Ribosome assembly protein 1 (RIA1) (Saccharomyces cerevisiae (strain ATCC 204508 / S288c) (Baker's yeast)).